Reading from the N-terminus, the 252-residue chain is Methylthioribulose-1-phosphate dehydratase (252 aa).

C105 provides a ligand contact to substrate. Zn(2+) contacts are provided by H123 and H125. E151 serves as the catalytic Proton donor/acceptor. A Zn(2+)-binding site is contributed by H208.

This sequence belongs to the aldolase class II family. MtnB subfamily. Requires Zn(2+) as cofactor.

The protein resides in the cytoplasm. The enzyme catalyses 5-(methylsulfanyl)-D-ribulose 1-phosphate = 5-methylsulfanyl-2,3-dioxopentyl phosphate + H2O. It participates in amino-acid biosynthesis; L-methionine biosynthesis via salvage pathway; L-methionine from S-methyl-5-thio-alpha-D-ribose 1-phosphate: step 2/6. Functionally, catalyzes the dehydration of methylthioribulose-1-phosphate (MTRu-1-P) into 2,3-diketo-5-methylthiopentyl-1-phosphate (DK-MTP-1-P). This chain is Methylthioribulose-1-phosphate dehydratase, found in Sclerotinia sclerotiorum (strain ATCC 18683 / 1980 / Ss-1) (White mold).